The primary structure comprises 66 residues: Photosystem II reaction center protein H (66 aa).

A helical membrane pass occupies residues 29–49; sequence PIMGLTMVLFLVFLLIILQIY.

It belongs to the PsbH family. PSII is composed of 1 copy each of membrane proteins PsbA, PsbB, PsbC, PsbD, PsbE, PsbF, PsbH, PsbI, PsbJ, PsbK, PsbL, PsbM, PsbT, PsbX, PsbY, PsbZ, Psb30/Ycf12, at least 3 peripheral proteins of the oxygen-evolving complex and a large number of cofactors. It forms dimeric complexes.

The protein localises to the plastid. The protein resides in the chloroplast thylakoid membrane. Functionally, one of the components of the core complex of photosystem II (PSII), required for its stability and/or assembly. PSII is a light-driven water:plastoquinone oxidoreductase that uses light energy to abstract electrons from H(2)O, generating O(2) and a proton gradient subsequently used for ATP formation. It consists of a core antenna complex that captures photons, and an electron transfer chain that converts photonic excitation into a charge separation. The sequence is that of Photosystem II reaction center protein H from Thalassiosira pseudonana (Marine diatom).